Here is a 156-residue protein sequence, read N- to C-terminus: MTIQIDFIDETNEVTAEQIETLEQLIREAAAVENVPEGAEVSVSFVDNERIRVMNRDYRGKDAPTDVLSFALEEEGEGEIDIIGADVPPVLGDIIISIPKAKEQAAEYGHSFMRELGFLAVHGFLHLLGYDHETEEEERVMFAKQEEILTRFGLTR.

3 residues coordinate Zn(2+): H122, H126, and H132.

The protein belongs to the endoribonuclease YbeY family. Zn(2+) is required as a cofactor.

The protein resides in the cytoplasm. Its function is as follows. Single strand-specific metallo-endoribonuclease involved in late-stage 70S ribosome quality control and in maturation of the 3' terminus of the 16S rRNA. This chain is Endoribonuclease YbeY, found in Geobacillus thermodenitrificans (strain NG80-2).